Reading from the N-terminus, the 457-residue chain is Adenylosuccinate synthetase isozyme 1 (457 aa).

Positions 1–24 are disordered; the sequence is MSGTRASNDRPPGTGGVKRGRLQQ. Residues 42–48 and 70–72 contribute to the GTP site; these read GDEGKGK and GHT. Asp43 functions as the Proton acceptor in the catalytic mechanism. Mg(2+)-binding residues include Asp43 and Gly70. Residue Asp43 participates in substrate binding. IMP is bound by residues 43–46, 68–71, Thr163, Arg177, Asn256, Thr271, and Arg335; these read DEGK and NAGH. His71 serves as the catalytic Proton donor. Residue 331–337 participates in substrate binding; the sequence is VTTGRKR. Residues Arg337, 363–365, and 445–448 each bind GTP; these read KLD and GVGK.

It belongs to the adenylosuccinate synthetase family. In terms of assembly, homodimer. Mg(2+) is required as a cofactor. High levels in muscle.

The protein resides in the cytoplasm. It is found in the membrane. It carries out the reaction IMP + L-aspartate + GTP = N(6)-(1,2-dicarboxyethyl)-AMP + GDP + phosphate + 2 H(+). Its pathway is purine metabolism; AMP biosynthesis via de novo pathway; AMP from IMP: step 1/2. Weakly inhibited by AMP non-competitively to all substrates. Inhibited by IMP non-competitively with respect to GTP. Inhibited by fructose 1,6-bisphosphate competitively with respect to IMP. In terms of biological role, component of the purine nucleotide cycle (PNC), which interconverts IMP and AMP to regulate the nucleotide levels in various tissues, and which contributes to glycolysis and ammoniagenesis. Catalyzes the first committed step in the biosynthesis of AMP from IMP. This chain is Adenylosuccinate synthetase isozyme 1 (Adss1), found in Mus musculus (Mouse).